Here is a 551-residue protein sequence, read N- to C-terminus: Alkaline nuclease (551 aa).

This sequence belongs to the herpesviridae alkaline nuclease family. As to quaternary structure, interacts with major DNA-binding protein; this interaction increases the nuclease processivity of the alkaline exonuclease.

The protein resides in the host nucleus. The protein localises to the host cytoplasm. Its function is as follows. Plays a role in processing non linear or branched viral DNA intermediates in order to promote the production of mature packaged unit-length linear progeny viral DNA molecules. Exhibits endonuclease and exonuclease activities and accepts both double-stranded and single-stranded DNA as substrate. Exonuclease digestion of DNA is in the 5'-&gt; 3' direction and the products are 5'-monophosphate nucleosides. Additionally, forms a recombinase with the major DNA-binding protein, which displays strand exchange activity. This Homo sapiens (Human) protein is Alkaline nuclease.